The following is a 297-amino-acid chain: 2-dehydropantoate 2-reductase (297 aa).

Residues 11–16, Asn-107, and Ala-133 contribute to the NADP(+) site; that span reads GAGAMG. Asn-107 is a substrate binding site. Lys-187 (proton donor) is an active-site residue. Residues Asn-191, Asn-195, Asn-205, and Ser-251 each contribute to the substrate site. Glu-263 provides a ligand contact to NADP(+).

It belongs to the ketopantoate reductase family.

The protein resides in the cytoplasm. The catalysed reaction is (R)-pantoate + NADP(+) = 2-dehydropantoate + NADPH + H(+). It functions in the pathway cofactor biosynthesis; (R)-pantothenate biosynthesis; (R)-pantoate from 3-methyl-2-oxobutanoate: step 2/2. Its function is as follows. Catalyzes the NADPH-dependent reduction of ketopantoate into pantoic acid. This chain is 2-dehydropantoate 2-reductase, found in Listeria monocytogenes serovar 1/2a (strain ATCC BAA-679 / EGD-e).